The primary structure comprises 180 residues: Protein SPMIP9 (180 aa).

As to quaternary structure, microtubule inner protein component of sperm flagellar doublet microtubules.

The protein localises to the nucleus. The protein resides in the cytoplasm. Its subcellular location is the cytoskeleton. It is found in the flagellum axoneme. Functionally, microtubule inner protein (MIP) part of the dynein-decorated doublet microtubules (DMTs) in flagella axoneme. The polypeptide is Protein SPMIP9 (SPMIP9) (Bos taurus (Bovine)).